The following is a 609-amino-acid chain: Glutamine--fructose-6-phosphate aminotransferase [isomerizing] (609 aa).

Residue C2 is the Nucleophile; for GATase activity of the active site. Residues C2–R218 enclose the Glutamine amidotransferase type-2 domain. SIS domains lie at A286 to L426 and L458 to P599. K604 functions as the For Fru-6P isomerization activity in the catalytic mechanism.

As to quaternary structure, homodimer.

Its subcellular location is the cytoplasm. It carries out the reaction D-fructose 6-phosphate + L-glutamine = D-glucosamine 6-phosphate + L-glutamate. Catalyzes the first step in hexosamine metabolism, converting fructose-6P into glucosamine-6P using glutamine as a nitrogen source. In Salmonella typhi, this protein is Glutamine--fructose-6-phosphate aminotransferase [isomerizing].